Consider the following 280-residue polypeptide: UPF0328 protein ECU06_0020/ECU06_1700 (280 aa).

Belongs to the UPF0328 family.

The protein is UPF0328 protein ECU06_0020/ECU06_1700 of Encephalitozoon cuniculi (strain GB-M1) (Microsporidian parasite).